The chain runs to 299 residues: Acetylglutamate kinase (299 aa).

Substrate is bound by residues 72 to 73 (GG), arginine 94, and asparagine 196.

The protein belongs to the acetylglutamate kinase family. ArgB subfamily.

The protein localises to the cytoplasm. It catalyses the reaction N-acetyl-L-glutamate + ATP = N-acetyl-L-glutamyl 5-phosphate + ADP. It participates in amino-acid biosynthesis; L-arginine biosynthesis; N(2)-acetyl-L-ornithine from L-glutamate: step 2/4. Catalyzes the ATP-dependent phosphorylation of N-acetyl-L-glutamate. The polypeptide is Acetylglutamate kinase (Burkholderia thailandensis (strain ATCC 700388 / DSM 13276 / CCUG 48851 / CIP 106301 / E264)).